Consider the following 554-residue polypeptide: Suppressor of tumorigenicity 7 protein homolog (554 aa).

4 helical membrane passes run 15 to 35 (CIVWSWTYLWTLWFFIMLFLV), 62 to 82 (FYVALTGTSSLISGLILIFEW), 489 to 509 (LPFFILFTAGLCSFTAMLALL), and 516 to 536 (LMGVFAKAFLSTLFAPLNFVM).

This sequence belongs to the ST7 family.

The protein localises to the membrane. In Gallus gallus (Chicken), this protein is Suppressor of tumorigenicity 7 protein homolog (ST7).